A 391-amino-acid chain; its full sequence is GTPase Obg (391 aa).

The Obg domain occupies 1-159 (MKFIDEALIR…RDLLLELMLL (159 aa)). The region spanning 160 to 333 (ADVGMLGLPN…LTRDIMDFIE (174 aa)) is the OBG-type G domain. GTP-binding positions include 166-173 (GLPNAGKS), 191-195 (FTTLV), 213-216 (DIPG), 283-286 (NKID), and 314-316 (SAA). Mg(2+) is bound by residues S173 and T193.

This sequence belongs to the TRAFAC class OBG-HflX-like GTPase superfamily. OBG GTPase family. As to quaternary structure, monomer. Mg(2+) is required as a cofactor.

It is found in the cytoplasm. Its function is as follows. An essential GTPase which binds GTP, GDP and possibly (p)ppGpp with moderate affinity, with high nucleotide exchange rates and a fairly low GTP hydrolysis rate. Plays a role in control of the cell cycle, stress response, ribosome biogenesis and in those bacteria that undergo differentiation, in morphogenesis control. In Haemophilus ducreyi (strain 35000HP / ATCC 700724), this protein is GTPase Obg.